A 505-amino-acid polypeptide reads, in one-letter code: MVSIRPDEISSILKKQIADYDKSVSVSNVGTVLQIGDGIARVYGLEKAMAGELVEFEDGTEGIALNLEDDNVGAVLMGEGLGIQEGSTVKATGKIASVPVGDAMLGRVVNPLGQPVDGNGEIATSDSRLIESLAPGIIKRKSVHEPMQTGITSIDAMIPIGRGQRELIIGDRQTGKTAIAIDTIINQKGQDVVCVYVAVGQKSASVAQVVEVLREKGALEYTIVVNASASEAAALQYLAPYTGAAIAEHFMYQGKATLVIYDDLTKQAQAYRQMSLLLRRPPGREAYPGDVFYCHSRLLERAAKLSDAMGSGSMTALPIIETQAGDVSAYIPTNVISITDGQIFLSADLFNSGLRPAINVGISVSRVGGAAQTKAIKKIAGTLKLELAQFDELAAFSQFASDLDEATQQQLERGKRLRELLKQAQFAPLNLAEQVAVVYAGVKGLIDEVPVEQVTQFAAELREYLKTSKPDYINQVLTEKKLSDDIEAVLKESINEVKSSMLAAA.

170–177 (GDRQTGKT) lines the ATP pocket.

It belongs to the ATPase alpha/beta chains family. As to quaternary structure, F-type ATPases have 2 components, CF(1) - the catalytic core - and CF(0) - the membrane proton channel. CF(1) has five subunits: alpha(3), beta(3), gamma(1), delta(1), epsilon(1). CF(0) has four main subunits: a(1), b(1), b'(1) and c(9-12).

Its subcellular location is the cellular thylakoid membrane. It catalyses the reaction ATP + H2O + 4 H(+)(in) = ADP + phosphate + 5 H(+)(out). Its function is as follows. Produces ATP from ADP in the presence of a proton gradient across the membrane. The alpha chain is a regulatory subunit. This is ATP synthase subunit alpha from Prochlorococcus marinus (strain SARG / CCMP1375 / SS120).